The chain runs to 152 residues: Transcriptional regulator MraZ (152 aa).

2 consecutive SpoVT-AbrB domains span residues 5–52 (ATMV…PLPE) and 81–124 (ASEC…DEQT).

The protein belongs to the MraZ family. In terms of assembly, forms oligomers.

Its subcellular location is the cytoplasm. The protein localises to the nucleoid. Functionally, negatively regulates its own expression and that of the subsequent genes in the proximal part of the division and cell wall (dcw) gene cluster. Acts by binding directly to DNA. May also regulate the expression of genes outside the dcw cluster. The sequence is that of Transcriptional regulator MraZ from Serratia proteamaculans (strain 568).